Reading from the N-terminus, the 372-residue chain is MSIAPPPLSVLLELTHRCPLACPYCSNPIALAALREEMDTAGWRSLLQQAADMGVLQAHFSGGEPMLRKDLPELVAHARALGLYSNLITSGVAGGEPMLDQLQAAGLEHVQLSVQDVDAAGADRIAGYRNSLSKKREFAAAVRARGLPLTINAVLHRHNAERVPGMIALALEWQAERIEVAHTQYDGWGLRNRAALMPSREQLLATIDAVETARRQLGDRLAIDFVTPDYYARQPKPCMGGWGQRFVNISPRGDVLPCHAAETIDGLRFDNLRERSLADIWNNGEAFVRFRGTAWMPEVCQGCPKREIDWGGCRCQALALSGDAATLDPVCERSPIHAQVRATAEQESASPAPAFIYRRPERPAAATADPLE.

In terms of domain architecture, Radical SAM core spans 4 to 220 (APPPLSVLLE…ETARRQLGDR (217 aa)). Residues Cys-18, Cys-22, and Cys-25 each contribute to the [4Fe-4S] cluster site. Positions 342–372 (ATAEQESASPAPAFIYRRPERPAAATADPLE) are disordered.

This sequence belongs to the radical SAM superfamily. PqqE family. Interacts with PqqD. The interaction is necessary for activity of PqqE. The cofactor is [4Fe-4S] cluster.

It carries out the reaction [PQQ precursor protein] + S-adenosyl-L-methionine = E-Y cross-linked-[PQQ precursor protein] + 5'-deoxyadenosine + L-methionine + H(+). Its pathway is cofactor biosynthesis; pyrroloquinoline quinone biosynthesis. Functionally, catalyzes the cross-linking of a glutamate residue and a tyrosine residue in the PqqA protein as part of the biosynthesis of pyrroloquinoline quinone (PQQ). This is PqqA peptide cyclase from Xanthomonas euvesicatoria pv. vesicatoria (strain 85-10) (Xanthomonas campestris pv. vesicatoria).